Here is a 160-residue protein sequence, read N- to C-terminus: SsrA-binding protein (160 aa).

Belongs to the SmpB family.

The protein localises to the cytoplasm. Required for rescue of stalled ribosomes mediated by trans-translation. Binds to transfer-messenger RNA (tmRNA), required for stable association of tmRNA with ribosomes. tmRNA and SmpB together mimic tRNA shape, replacing the anticodon stem-loop with SmpB. tmRNA is encoded by the ssrA gene; the 2 termini fold to resemble tRNA(Ala) and it encodes a 'tag peptide', a short internal open reading frame. During trans-translation Ala-aminoacylated tmRNA acts like a tRNA, entering the A-site of stalled ribosomes, displacing the stalled mRNA. The ribosome then switches to translate the ORF on the tmRNA; the nascent peptide is terminated with the 'tag peptide' encoded by the tmRNA and targeted for degradation. The ribosome is freed to recommence translation, which seems to be the essential function of trans-translation. The sequence is that of SsrA-binding protein from Marinobacter nauticus (strain ATCC 700491 / DSM 11845 / VT8) (Marinobacter aquaeolei).